The following is a 257-amino-acid chain: S-methyl-5'-thioadenosine phosphorylase (257 aa).

Residues Ser-10 and 50–51 (RH) each bind phosphate. A substrate-binding site is contributed by Met-180. Thr-181 lines the phosphate pocket. Substrate is bound at residue 204-206 (DYD).

This sequence belongs to the PNP/MTAP phosphorylase family. MTAP subfamily. As to quaternary structure, homohexamer. Dimer of a homotrimer.

It catalyses the reaction S-methyl-5'-thioadenosine + phosphate = 5-(methylsulfanyl)-alpha-D-ribose 1-phosphate + adenine. It participates in amino-acid biosynthesis; L-methionine biosynthesis via salvage pathway; S-methyl-5-thio-alpha-D-ribose 1-phosphate from S-methyl-5'-thioadenosine (phosphorylase route): step 1/1. In terms of biological role, catalyzes the reversible phosphorylation of S-methyl-5'-thioadenosine (MTA) to adenine and 5-methylthioribose-1-phosphate. Involved in the breakdown of MTA, a major by-product of polyamine biosynthesis. Responsible for the first step in the methionine salvage pathway after MTA has been generated from S-adenosylmethionine. Has broad substrate specificity with 6-aminopurine nucleosides as preferred substrates. The sequence is that of S-methyl-5'-thioadenosine phosphorylase from Pyrococcus horikoshii (strain ATCC 700860 / DSM 12428 / JCM 9974 / NBRC 100139 / OT-3).